Reading from the N-terminus, the 401-residue chain is 1-deoxy-D-xylulose 5-phosphate reductoisomerase (401 aa).

Positions 10, 11, 12, 13, 36, 37, 38, and 124 each coordinate NADPH. Residue Lys-125 participates in 1-deoxy-D-xylulose 5-phosphate binding. Residue Glu-126 participates in NADPH binding. Asp-150 is a binding site for Mn(2+). The 1-deoxy-D-xylulose 5-phosphate site is built by Ser-151, Glu-152, Ser-176, and His-199. Glu-152 lines the Mn(2+) pocket. An NADPH-binding site is contributed by Gly-205. 1-deoxy-D-xylulose 5-phosphate-binding residues include Ser-212, Asn-217, Lys-218, and Glu-221. A Mn(2+)-binding site is contributed by Glu-221.

This sequence belongs to the DXR family. It depends on Mg(2+) as a cofactor. Mn(2+) serves as cofactor.

It carries out the reaction 2-C-methyl-D-erythritol 4-phosphate + NADP(+) = 1-deoxy-D-xylulose 5-phosphate + NADPH + H(+). It functions in the pathway isoprenoid biosynthesis; isopentenyl diphosphate biosynthesis via DXP pathway; isopentenyl diphosphate from 1-deoxy-D-xylulose 5-phosphate: step 1/6. Functionally, catalyzes the NADPH-dependent rearrangement and reduction of 1-deoxy-D-xylulose-5-phosphate (DXP) to 2-C-methyl-D-erythritol 4-phosphate (MEP). This chain is 1-deoxy-D-xylulose 5-phosphate reductoisomerase, found in Acaryochloris marina (strain MBIC 11017).